The sequence spans 310 residues: MNHLTGLSRLSADSITGLLDTAAGFKQTLRSPNASFSPTLKNRRIALVFFENSTRTRFSFEIAARNLGAGTLGFSAASSSVSKGETLSDTIKNLEAMQVDAFVLRHPSSGSAKLISRITPKPVINAGDGSNEHPTQALLDMFTLREHFGSLKGLKVTIIGDVLHSRVARSNIYGLLRAGAEVGLCGPVTLIPPDAEKLGVRLFTDLDRAIAWADTAIVLRLQLERASGTYLPSLEEYSRHYGLTDERLERTGKHLLVLHPGPINREIEISNHVADRIQPPGYSKSMLLEQVTNGIAIRMAVLETLLGGTP.

Carbamoyl phosphate is bound by residues R55 and T56. K83 contacts L-aspartate. Carbamoyl phosphate-binding residues include R105, H133, and Q136. The L-aspartate site is built by R166 and R220. Carbamoyl phosphate-binding residues include G261 and P262.

Belongs to the aspartate/ornithine carbamoyltransferase superfamily. ATCase family. In terms of assembly, heterododecamer (2C3:3R2) of six catalytic PyrB chains organized as two trimers (C3), and six regulatory PyrI chains organized as three dimers (R2).

The enzyme catalyses carbamoyl phosphate + L-aspartate = N-carbamoyl-L-aspartate + phosphate + H(+). It participates in pyrimidine metabolism; UMP biosynthesis via de novo pathway; (S)-dihydroorotate from bicarbonate: step 2/3. In terms of biological role, catalyzes the condensation of carbamoyl phosphate and aspartate to form carbamoyl aspartate and inorganic phosphate, the committed step in the de novo pyrimidine nucleotide biosynthesis pathway. The sequence is that of Aspartate carbamoyltransferase catalytic subunit from Chlorobium phaeovibrioides (strain DSM 265 / 1930) (Prosthecochloris vibrioformis (strain DSM 265)).